Consider the following 446-residue polypeptide: Glycogen synthase (446 aa).

Arg15 lines the ADP-alpha-D-glucose pocket.

The protein belongs to the glycosyltransferase 1 family. Bacterial/plant glycogen synthase subfamily.

It carries out the reaction [(1-&gt;4)-alpha-D-glucosyl](n) + ADP-alpha-D-glucose = [(1-&gt;4)-alpha-D-glucosyl](n+1) + ADP + H(+). Its pathway is glycan biosynthesis; glycogen biosynthesis. Synthesizes alpha-1,4-glucan chains using ADP-glucose. The polypeptide is Glycogen synthase (Deinococcus deserti (strain DSM 17065 / CIP 109153 / LMG 22923 / VCD115)).